A 67-amino-acid chain; its full sequence is Ubiquinol-cytochrome c reductase complex assembly factor 6 (67 aa).

Topologically, residues 1-8 (MPGGVPWS) are mitochondrial matrix. A helical; Signal-anchor for type II membrane protein transmembrane segment spans residues 9 to 25 (AYLKMLSSSLLAMCAGA). The Mitochondrial intermembrane portion of the chain corresponds to 26-67 (QVVHWYYRPDLTIPEIPPKPGELKTELLGLKERRHEPHVSQQ).

This sequence belongs to the UQCC6 family. Interacts with UQCRC1. Interacts with UQCRQ. Interacts with UQCC5. Forms a complex, named COMB/coordinator of mitochondrial CYTB biogenesis, composed of UQCC1, UQCC2, UQCC4, UQCC5 and UQCC6; stabilizes nascent cytochrome b/MT-CYB and promotes its membrane insertion. Forms a complex, named COMA, composed of UQCC1, UQCC2 and UQCC4; activates MT-CYB translation. Forms a complex, named COMC, composed of UQCC1, UQCC2; UQCC3 and UQCC4; mediates MT-CYB hemylation and association with the first nuclear-encoded complex III subunit UQCRQ. Interacts with MT-CYB. As to expression, highly expressed in brown adipose, cardiac and skeletal muscle (at protein level).

Its subcellular location is the mitochondrion inner membrane. Its function is as follows. Required for the assembly and stability of the mitochondrial ubiquinol-cytochrome c reductase complex (complex III or cytochrome b-c1 complex), a multisubunit transmembrane complex that is part of the mitochondrial electron transport chain (ETC) which drives oxidative phosphorylation. Mediates early complex III biogenesis. Participates in regulating the levels of electron transport chain proteins, and therefore energy supply, in response to changes in energy demand. Also required for cytochrome c oxidase complex (complex IV) assembly. This chain is Ubiquinol-cytochrome c reductase complex assembly factor 6, found in Mus musculus (Mouse).